The chain runs to 665 residues: Protein LOW PHOTOSYNTHETIC EFFICIENCY 1, chloroplastic (665 aa).

The N-terminal 68 residues, 1-68 (MQALSILPLK…VSSNRKVLFL (68 aa)), are a transit peptide targeting the chloroplast. PPR repeat units follow at residues 145-179 (PLQVFCAMIKGFGKDKRLKPAVAVVDWLKRKKSES), 181-217 (GVIGPNLFIYNSLLGAMRGFGEAEKILKDMEEEGIVP), 218-252 (NIVTYNTLMVIYMEEGEFLKALGILDLTKEKGFEP), 253-283 (NPITYSTALLVYRRMEDGMGALEFFVELREK), 309-344 (GRICYQVMRRWLVKDDNWTTRVLKLLNAMDSAGVRP), 345-375 (SREEHERLIWACTREEHYIVGKELYKRIRER), 380-414 (SLSVCNHLIWLMGKAKKWWAALEIYEDLLDEGPEP), 422-456 (VVSHFNILLSAASKRGIWRWGVRLLNKMEDKGLKP), 457-491 (QRRHWNAVLVACSKASETTAAIQIFKAMVDNGEKP), 492-526 (TVISYGALLSALEKGKLYDEAFRVWNHMIKVGIEP), 527-561 (NLYAYTTMASVLTGQQKFNLLDTLLKEMASKGIEP), 562-596 (SVVTFNAVISGCARNGLSGVAYEWFHRMKSENVEP), and 597-631 (NEITYEMLIEALANDAKPRLAYELHVKAQNEGLKL).

This sequence belongs to the PPR family. P subfamily. In terms of assembly, interacts with HCF173.

The protein localises to the plastid. It is found in the chloroplast thylakoid membrane. It localises to the chloroplast stroma. Required for light-regulated photosystem II (PSII) biogenesis and grana thylakoids formation by binding to the 5' UTR of PSII subunit mRNAs (e.g. psbJ, psbN and psbA) in a light-dependent manner through a redox-based mechanism, and facilitating the association of HCF173 with target mRNAs, which encodes PSII reaction center proteins (e.g. J, N and D1), thus regulating its expression by modulating ribosome loading. This is Protein LOW PHOTOSYNTHETIC EFFICIENCY 1, chloroplastic from Arabidopsis thaliana (Mouse-ear cress).